The following is a 699-amino-acid chain: Polyribonucleotide nucleotidyltransferase (699 aa).

D484 and D490 together coordinate Mg(2+). One can recognise a KH domain in the interval 551 to 610 (PRITTIQVKPDQVRTVIGPGGKNVRGIIEATGCAIDIEDDGRINIASADGDACKAAIKMI). One can recognise an S1 motif domain in the interval 620-688 (GKLYMATVKK…RQGKIKLSRK (69 aa)).

This sequence belongs to the polyribonucleotide nucleotidyltransferase family. Mg(2+) serves as cofactor.

The protein resides in the cytoplasm. It catalyses the reaction RNA(n+1) + phosphate = RNA(n) + a ribonucleoside 5'-diphosphate. Functionally, involved in mRNA degradation. Catalyzes the phosphorolysis of single-stranded polyribonucleotides processively in the 3'- to 5'-direction. This chain is Polyribonucleotide nucleotidyltransferase, found in Syntrophotalea carbinolica (strain DSM 2380 / NBRC 103641 / GraBd1) (Pelobacter carbinolicus).